The sequence spans 501 residues: Cystine/glutamate transporter (501 aa).

Residues 1 to 43 (MVRKPVVSTISKGGYLQGNVNGRLPSLGNKEPPGQEKVQLKRK) are Cytoplasmic-facing. Ser26 carries the phosphoserine modification. Residues 44 to 64 (VTLLRGVSIIIGTIIGAGIFI) form a helical membrane-spanning segment. Residues 65–74 (SPKGVLQNTG) are Extracellular-facing. Residues 75-95 (SVGMSLTIWTVCGVLSLFGAL) form a helical membrane-spanning segment. Over 96-101 (SYAELG) the chain is Cytoplasmic. Residues 102 to 116 (TTIKKSGGHYTYILE) lie within the membrane without spanning it. Over 117–130 (VFGPLPAFVRVWVE) the chain is Cytoplasmic. A helical membrane pass occupies residues 131-150 (LLIIRPAATAVISLAFGRYI). Residue Arg135 coordinates L-glutamate. The Extracellular segment spans residues 151-163 (LEPFFIQCEIPEL). A helical membrane pass occupies residues 164-179 (AIKLITAVGITVVMVL). At 180–193 (NSMSVSWSARIQIF) the chain is on the cytoplasmic side. A helical membrane pass occupies residues 194–210 (LTFCKLTAILIIIVPGV). Residues 211 to 234 (MQLIKGQTQNFKDAFSGRDSSITR) are Extracellular-facing. The helical transmembrane segment at 235-255 (LPLAFYYGMYAYAGWFYLNFV) threads the bilayer. Tyr244 lines the L-glutamate pocket. Topologically, residues 256-265 (TEEVENPEKT) are cytoplasmic. The chain crosses the membrane as a helical span at residues 266-286 (IPLAICISMAIVTIGYVLTNV). Over 287-317 (AYFTTINAEELLLSNAVAVTFSERLLGNFSL) the chain is Extracellular. Asn314 is a glycosylation site (N-linked (GlcNAc...) asparagine). A helical transmembrane segment spans residues 318–338 (AVPIFVALSCFGSMNGGVFAV). Residues 339 to 364 (SRLFYVASREGHLPEILSMIHVRKHT) are Cytoplasmic-facing. The chain crosses the membrane as a helical span at residues 365 to 385 (PLPAVIVLHPLTMIMLFSGDL). Residues 386–387 (DS) lie on the Extracellular side of the membrane. A helical membrane pass occupies residues 388–408 (LLNFLSFARWLFIGLAVAGLI). At 409 to 422 (YLRYKCPDMHRPFK) the chain is on the cytoplasmic side. Residues 423–443 (VPLFIPALFSFTCLFMVALSL) form a helical membrane-spanning segment. Topologically, residues 444-449 (YSDPFS) are extracellular. The chain crosses the membrane as a helical span at residues 450 to 470 (TGIGFVITLTGVPAYYLFIIW). Topologically, residues 471–501 (DKKPRWFRIMSEKITRTLQIILEVVPEEDKL) are cytoplasmic.

The protein belongs to the amino acid-polyamine-organocation (APC) superfamily. L-type amino acid transporter (LAT) (TC 2.A.3.8) family. Disulfide-linked heterodimer with the amino acid transport protein SLC3A2/4F2hc; this interaction mediates cell membrane localization. Ubiquitinated by TRIM26; leading to proteasomal degradation. As to expression, expressed in term placenta and primary term cytotrophoblast. Expressed mainly in the brain, but also in pancreas.

The protein localises to the cell membrane. Its subcellular location is the cell projection. It localises to the microvillus membrane. It carries out the reaction L-cystine(out) + L-glutamate(in) = L-cystine(in) + L-glutamate(out). The enzyme catalyses an L-alpha-amino acid(in) + L-kynurenine(out) = an L-alpha-amino acid(out) + L-kynurenine(in). It catalyses the reaction N-acetyl-L-cysteine(out) + L-glutamate(in) = N-acetyl-L-cysteine(in) + L-glutamate(out). With respect to regulation, inhibited by erastin and sulfasalazine. Inhibited by (S)-lactate. Inactivated by p-chloromercuribenzoic acid and p-chloromercuribenzenesulfonic acid. In terms of biological role, heterodimer with SLC3A2, that functions as an antiporter by mediating the exchange of extracellular anionic L-cystine and intracellular L-glutamate across the cellular plasma membrane. Provides L-cystine for the maintenance of the redox balance between extracellular L-cystine and L-cysteine and for the maintenance of the intracellular levels of glutathione that is essential for cells protection from oxidative stress. The transport is sodium-independent, electroneutral with a stoichiometry of 1:1, and is drove by the high intracellular concentration of L-glutamate and the intracellular reduction of L-cystine. In addition, mediates the import of L-kynurenine leading to anti-ferroptotic signaling propagation required to maintain L-cystine and glutathione homeostasis. Moreover, mediates N-acetyl-L-cysteine uptake into the placenta leading to subsequently down-regulation of pathways associated with oxidative stress, inflammation and apoptosis. In vitro can also transport L-aspartate. May participate in astrocyte and meningeal cell proliferation during development and can provide neuroprotection by promoting glutathione synthesis and delivery from non-neuronal cells such as astrocytes and meningeal cells to immature neurons. Controls the production of pheomelanin pigment directly. The polypeptide is Cystine/glutamate transporter (Homo sapiens (Human)).